Reading from the N-terminus, the 185-residue chain is MYINTHDSIFGAGNHKTFTFLYIISLHSSYKLFHFLKMQQNTNVVFKLEVDERKKKKAMKIVCGFSGVTSLNVMEEGKLTVTGEFDNYEMTKKLKKICKHVAIIAAEPIREPEQNRNPVTRREPNREPEQNRSRVTRREPSREPEPNRAPLARRESRPRTHSRPSIPHARPSRVRGENSDGCIIM.

Residues 39 to 106 form the HMA domain; sequence QQNTNVVFKL…ICKHVAIIAA (68 aa). Over residues 109–158 the composition is skewed to basic and acidic residues; the sequence is IREPEQNRNPVTRREPNREPEQNRSRVTRREPSREPEPNRAPLARRESRP. Residues 109–185 are disordered; that stretch reads IREPEQNRNP…GENSDGCIIM (77 aa). C182 is subject to Cysteine methyl ester. Residue C182 is the site of S-farnesyl cysteine attachment. Positions 183–185 are cleaved as a propeptide — removed in mature form; it reads IIM.

This sequence belongs to the HIPP family.

Functionally, probable heavy-metal-binding protein. This Arabidopsis thaliana (Mouse-ear cress) protein is Heavy metal-associated isoprenylated plant protein 11.